We begin with the raw amino-acid sequence, 105 residues long: Pyrimidine/purine nucleoside phosphorylase (105 aa).

This sequence belongs to the nucleoside phosphorylase PpnP family.

It carries out the reaction a purine D-ribonucleoside + phosphate = a purine nucleobase + alpha-D-ribose 1-phosphate. The enzyme catalyses adenosine + phosphate = alpha-D-ribose 1-phosphate + adenine. The catalysed reaction is cytidine + phosphate = cytosine + alpha-D-ribose 1-phosphate. It catalyses the reaction guanosine + phosphate = alpha-D-ribose 1-phosphate + guanine. It carries out the reaction inosine + phosphate = alpha-D-ribose 1-phosphate + hypoxanthine. The enzyme catalyses thymidine + phosphate = 2-deoxy-alpha-D-ribose 1-phosphate + thymine. The catalysed reaction is uridine + phosphate = alpha-D-ribose 1-phosphate + uracil. It catalyses the reaction xanthosine + phosphate = alpha-D-ribose 1-phosphate + xanthine. Its function is as follows. Catalyzes the phosphorolysis of diverse nucleosides, yielding D-ribose 1-phosphate and the respective free bases. Can use uridine, adenosine, guanosine, cytidine, thymidine, inosine and xanthosine as substrates. Also catalyzes the reverse reactions. In Delftia acidovorans (strain DSM 14801 / SPH-1), this protein is Pyrimidine/purine nucleoside phosphorylase.